Consider the following 839-residue polypeptide: Probable alpha-glucuronidase A (839 aa).

A signal peptide spans 1–18 (MRWSFLTVLLWLVSLTGA). Asparagine 49, asparagine 101, asparagine 148, asparagine 221, asparagine 278, asparagine 309, asparagine 342, asparagine 464, asparagine 526, asparagine 575, asparagine 681, and asparagine 731 each carry an N-linked (GlcNAc...) asparagine glycan.

This sequence belongs to the glycosyl hydrolase 67 family.

Its subcellular location is the secreted. The catalysed reaction is an alpha-D-glucuronoside + H2O = D-glucuronate + an alcohol. In terms of biological role, alpha-glucuronidase involved in the hydrolysis of xylan, a major structural heterogeneous polysaccharide found in plant biomass representing the second most abundant polysaccharide in the biosphere, after cellulose. Releases 4-O-methylglucuronic acid from xylan. This is Probable alpha-glucuronidase A (aguA) from Aspergillus flavus (strain ATCC 200026 / FGSC A1120 / IAM 13836 / NRRL 3357 / JCM 12722 / SRRC 167).